Consider the following 408-residue polypeptide: Succinylornithine transaminase (408 aa).

The residue at position 252 (lysine 252) is an N6-(pyridoxal phosphate)lysine.

The protein belongs to the class-III pyridoxal-phosphate-dependent aminotransferase family. AstC subfamily. Requires pyridoxal 5'-phosphate as cofactor.

It carries out the reaction N(2)-succinyl-L-ornithine + 2-oxoglutarate = N-succinyl-L-glutamate 5-semialdehyde + L-glutamate. Its pathway is amino-acid degradation; L-arginine degradation via AST pathway; L-glutamate and succinate from L-arginine: step 3/5. Functionally, catalyzes the transamination of N(2)-succinylornithine and alpha-ketoglutarate into N(2)-succinylglutamate semialdehyde and glutamate. Can also act as an acetylornithine aminotransferase. The polypeptide is Succinylornithine transaminase (Salmonella paratyphi B (strain ATCC BAA-1250 / SPB7)).